The following is a 1027-amino-acid chain: INO80 complex subunit D (1027 aa).

Residue K87 forms a Glycyl lysine isopeptide (Lys-Gly) (interchain with G-Cter in SUMO2) linkage. Position 132 is a phosphoserine (S132). 5 disordered regions span residues 193–278, 519–574, 813–850, 914–969, and 982–1027; these read HFSP…VDPP, RGDN…LSMP, RQQYSSDHSHSSPHGSHYDSEHVPSPYSDHITSPHTTS, LSTS…TSPK, and QLSS…PSPN. A compositionally biased stretch (low complexity) spans 201 to 216; that stretch reads SQQQPPQQHSHLSPLS. Over residues 229-257 the composition is skewed to polar residues; it reads VCKSPQPQNTSLPMQGVAPTTHTIAQARQ. The span at 525–559 shows a compositional bias: basic residues; that stretch reads KVQHQQQRKPRKKTKPPALTKKHKKKRRRGPRRPQ. A compositionally biased stretch (low complexity) spans 914–932; the sequence is LSTSLSTPPTTSNSETTQP. The segment covering 937 to 954 has biased composition (polar residues); sequence VTPSSSSVLPGLPQTSFS. The span at 1001 to 1027 shows a compositional bias: low complexity; sequence APPTGFTVTGATATSTNNASSPFPSPN.

It belongs to the INO80D family. Component of the chromatin remodeling INO80 complex; specifically part of a complex module associated with the N-terminus of INO80.

Its subcellular location is the nucleus. Functionally, putative regulatory component of the chromatin remodeling INO80 complex which is involved in transcriptional regulation, DNA replication and probably DNA repair. The chain is INO80 complex subunit D from Homo sapiens (Human).